The primary structure comprises 305 residues: Epoxyqueuosine reductase (305 aa).

Aspartate 128 serves as the catalytic Proton donor. Residues 170 to 202 (LSLTSDTPHAKYCGTCRKCLDICPTKAIVHPFV) enclose the 4Fe-4S ferredoxin-type domain. Residues cysteine 182, cysteine 185, cysteine 188, cysteine 192, cysteine 208, cysteine 236, cysteine 239, and cysteine 243 each contribute to the [4Fe-4S] cluster site.

This sequence belongs to the QueG family. In terms of assembly, monomer. Cob(II)alamin is required as a cofactor. The cofactor is [4Fe-4S] cluster.

It localises to the cytoplasm. It catalyses the reaction epoxyqueuosine(34) in tRNA + AH2 = queuosine(34) in tRNA + A + H2O. The protein operates within tRNA modification; tRNA-queuosine biosynthesis. Catalyzes the conversion of epoxyqueuosine (oQ) to queuosine (Q), which is a hypermodified base found in the wobble positions of tRNA(Asp), tRNA(Asn), tRNA(His) and tRNA(Tyr). The sequence is that of Epoxyqueuosine reductase from Atelocyanobacterium thalassa (isolate ALOHA).